We begin with the raw amino-acid sequence, 444 residues long: Glutamyl-tRNA reductase (444 aa).

Substrate is bound by residues 49 to 52 (TCNR), serine 117, 122 to 124 (EPQ), and glutamine 128. Cysteine 50 acts as the Nucleophile in catalysis. NADP(+) is bound at residue 202 to 207 (GAGETI).

This sequence belongs to the glutamyl-tRNA reductase family. In terms of assembly, homodimer.

The enzyme catalyses (S)-4-amino-5-oxopentanoate + tRNA(Glu) + NADP(+) = L-glutamyl-tRNA(Glu) + NADPH + H(+). It participates in porphyrin-containing compound metabolism; protoporphyrin-IX biosynthesis; 5-aminolevulinate from L-glutamyl-tRNA(Glu): step 1/2. Catalyzes the NADPH-dependent reduction of glutamyl-tRNA(Glu) to glutamate 1-semialdehyde (GSA). The sequence is that of Glutamyl-tRNA reductase from Mannheimia succiniciproducens (strain KCTC 0769BP / MBEL55E).